We begin with the raw amino-acid sequence, 332 residues long: L-lactate dehydrogenase A chain (332 aa).

NAD(+) is bound by residues 29-57 and Arg-99; that span reads GMVGMASAISVLLKDLCDELALVDVMEEK. Substrate is bound by residues Arg-106, Asn-138, and Arg-169. An NAD(+)-binding site is contributed by Asn-138. His-193 functions as the Proton acceptor in the catalytic mechanism. Residue Thr-248 coordinates substrate.

The protein belongs to the LDH/MDH superfamily. LDH family. As to quaternary structure, homotetramer.

It localises to the cytoplasm. The enzyme catalyses (S)-lactate + NAD(+) = pyruvate + NADH + H(+). The protein operates within fermentation; pyruvate fermentation to lactate; (S)-lactate from pyruvate: step 1/1. Its function is as follows. Interconverts simultaneously and stereospecifically pyruvate and lactate with concomitant interconversion of NADH and NAD(+). This Lycodichthys dearborni (Antarctic eelpout) protein is L-lactate dehydrogenase A chain (ldha).